Consider the following 351-residue polypeptide: N-acetyl-gamma-glutamyl-phosphate reductase (351 aa).

The active site involves C150.

It belongs to the NAGSA dehydrogenase family. Type 1 subfamily.

It is found in the cytoplasm. The enzyme catalyses N-acetyl-L-glutamate 5-semialdehyde + phosphate + NADP(+) = N-acetyl-L-glutamyl 5-phosphate + NADPH + H(+). It functions in the pathway amino-acid biosynthesis; L-arginine biosynthesis; N(2)-acetyl-L-ornithine from L-glutamate: step 3/4. Its function is as follows. Catalyzes the NADPH-dependent reduction of N-acetyl-5-glutamyl phosphate to yield N-acetyl-L-glutamate 5-semialdehyde. The sequence is that of N-acetyl-gamma-glutamyl-phosphate reductase from Heliobacterium modesticaldum (strain ATCC 51547 / Ice1).